A 325-amino-acid polypeptide reads, in one-letter code: ATP synthase gamma chain (325 aa).

Belongs to the ATPase gamma chain family. As to quaternary structure, F-type ATPases have 2 components, CF(1) - the catalytic core - and CF(0) - the membrane proton channel. CF(1) has five subunits: alpha(3), beta(3), gamma(1), delta(1), epsilon(1). CF(0) has three main subunits: a, b and c.

The protein localises to the cell membrane. Functionally, produces ATP from ADP in the presence of a proton gradient across the membrane. The gamma chain is believed to be important in regulating ATPase activity and the flow of protons through the CF(0) complex. The protein is ATP synthase gamma chain of Corynebacterium diphtheriae (strain ATCC 700971 / NCTC 13129 / Biotype gravis).